The following is a 488-amino-acid chain: Protein nucleotidyltransferase YdiU (488 aa).

ATP-binding residues include Gly91, Gly93, Arg94, Lys114, Asp126, Gly127, Arg177, and Arg184. Residues 108–127 (RFDIQLKGSGPTPYSRRGDG) are disordered. Residue Asp253 is the Proton acceptor of the active site. Positions 254 and 263 each coordinate Mg(2+). An ATP-binding site is contributed by Asp263.

It belongs to the SELO family. Requires Mg(2+) as cofactor. Mn(2+) is required as a cofactor.

It carries out the reaction L-seryl-[protein] + ATP = 3-O-(5'-adenylyl)-L-seryl-[protein] + diphosphate. The catalysed reaction is L-threonyl-[protein] + ATP = 3-O-(5'-adenylyl)-L-threonyl-[protein] + diphosphate. It catalyses the reaction L-tyrosyl-[protein] + ATP = O-(5'-adenylyl)-L-tyrosyl-[protein] + diphosphate. The enzyme catalyses L-histidyl-[protein] + UTP = N(tele)-(5'-uridylyl)-L-histidyl-[protein] + diphosphate. It carries out the reaction L-seryl-[protein] + UTP = O-(5'-uridylyl)-L-seryl-[protein] + diphosphate. The catalysed reaction is L-tyrosyl-[protein] + UTP = O-(5'-uridylyl)-L-tyrosyl-[protein] + diphosphate. Nucleotidyltransferase involved in the post-translational modification of proteins. It can catalyze the addition of adenosine monophosphate (AMP) or uridine monophosphate (UMP) to a protein, resulting in modifications known as AMPylation and UMPylation. The sequence is that of Protein nucleotidyltransferase YdiU from Bacillus cereus (strain AH820).